The primary structure comprises 367 residues: Ribosomal lysine N-methyltransferase 5 (367 aa).

Residues Trp110, 170 to 172 (GAG), Asp192, Trp256, and Met288 each bind S-adenosyl-L-methionine.

The protein belongs to the class I-like SAM-binding methyltransferase superfamily. RKM5 family.

In terms of biological role, S-adenosyl-L-methionine-dependent protein-lysine N-methyltransferase that monomethylates 60S ribosomal protein L1 (RPL1A and RPL1B) at 'Lys-46'. The polypeptide is Ribosomal lysine N-methyltransferase 5 (RKM5) (Saccharomyces cerevisiae (strain JAY291) (Baker's yeast)).